A 261-amino-acid polypeptide reads, in one-letter code: RING finger and CHY zinc finger domain-containing protein 1 (261 aa).

The CHY-type zinc-finger motif lies at 13 to 80; sequence QERGQRGCEH…AQQTCEECST (68 aa). The Zn(2+) site is built by C20, H22, C33, C34, C40, C43, H44, H50, C62, C65, C75, C78, C87, C90, H101, C102, C105, C108, H118, C119, C122, C125, H134, and C136. The segment at 82–144 adopts a CTCHY-type zinc-finger fold; it reads FGEYYCDICH…KCIENVSRQN (63 aa). The RING-type zinc-finger motif lies at 145–189; it reads CPICLEDIHTSRVVAHVLPCGHLLHRTCYEEMLKEGYRCPLCMHS. At S257 the chain carries Phosphoserine.

Monomer and homodimer. Interacts with AR, MDM2, KAT5, PLAG1, PLAGL2, COPE, UBE2D2 and GORAB/NTKLBP1. In terms of processing, subject to ubiquitination and proteasomal degradation. Interaction with PLAGL2 or KAT5 enhances protein stability.

It is found in the nucleus. The protein resides in the nucleus speckle. It localises to the cytoplasm. It catalyses the reaction S-ubiquitinyl-[E2 ubiquitin-conjugating enzyme]-L-cysteine + [acceptor protein]-L-lysine = [E2 ubiquitin-conjugating enzyme]-L-cysteine + N(6)-ubiquitinyl-[acceptor protein]-L-lysine.. Its pathway is protein modification; protein ubiquitination. E3 ubiquitin-protein ligase that mediates ubiquitination of target proteins, including p53/TP53, TP73, HDAC1 and CDKN1B. Mediates ubiquitination and degradation of p53/TP53; preferentially acts on tetrameric p53/TP53. Catalyzes monoubiquitinates the translesion DNA polymerase POLH. Involved in the ribosome-associated quality control (RQC) pathway, which mediates the extraction of incompletely synthesized nascent chains from stalled ribosomes: RCHY1 acts downstream of NEMF and recognizes CAT tails associated with stalled nascent chains, leading to their ubiquitination and degradation. In terms of biological role, has no E3 ubiquitin-protein ligase activity. The sequence is that of RING finger and CHY zinc finger domain-containing protein 1 (RCHY1) from Homo sapiens (Human).